A 970-amino-acid chain; its full sequence is MSKKRVHELGKQLKEQGIELSNQELVEKLLHLGYDVKSHSSSLEDDQAHAAYEKILAERKPKAAPARPSGPGFVVRKRAHVEPPPVQEAQPVEAQPSYEEQPSYEEQPSYEEQPSLEEPAEVAAEAAPEPVEEPASSPEGGAPAGGAEPQPAPEAPPPSAAPAMPAAPSAPPSPAVRPPAPSVPAGAQPPGAPVRPAAPGVRPAAPGVRPAAPGVRPTGPGVRPSVPGGPRAPGQPTAPMAAAPHGPGAQPGQPAAPGPDPRTLRPTATQAVVISRPLVPVRRVTPPTGARTQFPAAPGPRALGEVRELKVVPGSLGREREFIDVSRDKRRGRTPGRPMSEEQAKSLSGKELLQAAITDRAYIPIRGKKKKPTKKGAKTQITEKAEHKKVIRVEESISVSELSQAMGVKASDLIRKLMQAGTMATINQQIDADTAAFLATEFGYTLEKKGFEVEEYIPEVEVDESKLVIRPPVVTVMGHVDHGKTSLLDAIRQADVAAGEAGGITQHIGAYAVQTPQGPITFLDTPGHEAFTAMRQRGAQVTDLVVLVVAADDGVMPQTVESIKAAKAAGVTILVAINKIDKPGATPERVMQQLTEYELVAEQWGGSTIMLPVSARTKQGIPELLEYIALQSEVLELKANPEMLASGRVIEAKLEKGRGPVATVLVEEGTLRVGDALVTGIHYGRVRAMMNERGEQVKEVPPGYPVEVLGLSGVPVAGDEFDVVQDEKAAKEVAEHRAEKQRKKELGASRKATLEDLFAKAKSGGGKVLNVVVKADVQGSSEAVTQALQKAATKKVGVKILDSGVGAITKSDVLTAAAGNGIIVGFNTKPESEIESIASQQGVKILLFDIIYEAVDKIREEMAGLLEPIIREKPLGKAEVRALFSIPKLGNIAGSAVTEGVIKRAANVRVLRDRKVVYSGKIGSLKRLKDDVREVQTGFECGIGIEGFSDVKPGDVIEAYELEEIRQSLD.

Disordered stretches follow at residues 54–270 and 328–348; these read KILA…TATQ and DKRR…KSLS. The segment covering 87 to 96 has biased composition (low complexity); that stretch reads QEAQPVEAQP. The span at 98-112 shows a compositional bias: polar residues; the sequence is YEEQPSYEEQPSYEE. Over residues 121 to 149 the composition is skewed to low complexity; sequence EVAAEAAPEPVEEPASSPEGGAPAGGAEP. Composition is skewed to pro residues over residues 150-160 and 168-182; these read QPAPEAPPPSA and PSAP…PAPS. The span at 183 to 253 shows a compositional bias: low complexity; sequence VPAGAQPPGA…PHGPGAQPGQ (71 aa). Residues 469–638 enclose the tr-type G domain; it reads IRPPVVTVMG…ALQSEVLELK (170 aa). Residues 478-485 are G1; the sequence is GHVDHGKT. 478–485 is a binding site for GTP; sequence GHVDHGKT. Residues 503–507 are G2; the sequence is GITQH. Residues 524–527 are G3; the sequence is DTPG. Residues 524-528 and 578-581 contribute to the GTP site; these read DTPGH and NKID. The G4 stretch occupies residues 578–581; it reads NKID. Residues 614-616 are G5; sequence SAR.

The protein belongs to the TRAFAC class translation factor GTPase superfamily. Classic translation factor GTPase family. IF-2 subfamily.

The protein resides in the cytoplasm. Functionally, one of the essential components for the initiation of protein synthesis. Protects formylmethionyl-tRNA from spontaneous hydrolysis and promotes its binding to the 30S ribosomal subunits. Also involved in the hydrolysis of GTP during the formation of the 70S ribosomal complex. This is Translation initiation factor IF-2 from Anaeromyxobacter sp. (strain Fw109-5).